A 149-amino-acid polypeptide reads, in one-letter code: Large ribosomal subunit protein bL9 (149 aa).

The protein belongs to the bacterial ribosomal protein bL9 family.

Functionally, binds to the 23S rRNA. In Legionella pneumophila (strain Paris), this protein is Large ribosomal subunit protein bL9.